Here is a 748-residue protein sequence, read N- to C-terminus: Polyribonucleotide nucleotidyltransferase (748 aa).

Mg(2+) contacts are provided by Asp-487 and Asp-493. The KH domain occupies 554–613; sequence PSTTTIKIDKDKIRDIIGPGGKVIKEICETSGAKIDISDDGTVSVYASDRDKLKVALDKI. One can recognise an S1 motif domain in the interval 623–691; sequence GEIFNGTVVK…NKGKAKLTIK (69 aa). The disordered stretch occupies residues 691–748; sequence KNADKDKSSNNTKPKTNVNNTKDNSEPEQRRDSSKKRAWNEDNNAETAEVITERKYFN. Positions 699 to 712 are enriched in low complexity; the sequence is SNNTKPKTNVNNTK. A compositionally biased stretch (basic and acidic residues) spans 713 to 722; it reads DNSEPEQRRD.

This sequence belongs to the polyribonucleotide nucleotidyltransferase family. The cofactor is Mg(2+).

Its subcellular location is the cytoplasm. It carries out the reaction RNA(n+1) + phosphate = RNA(n) + a ribonucleoside 5'-diphosphate. Involved in mRNA degradation. Catalyzes the phosphorolysis of single-stranded polyribonucleotides processively in the 3'- to 5'-direction. The protein is Polyribonucleotide nucleotidyltransferase of Rickettsia africae (strain ESF-5).